Reading from the N-terminus, the 237-residue chain is Large ribosomal subunit protein uL3 (237 aa).

2 disordered regions span residues 133-155 (ASHG…DPGK) and 213-237 (PENA…EGAE). Positions 135–150 (HGNSITHRSHGSTGQR) are enriched in polar residues. The residue at position 151 (glutamine 151) is an N5-methylglutamine. Over residues 220–237 (AGLRAGAKAEAAATEGAE) the composition is skewed to low complexity.

Belongs to the universal ribosomal protein uL3 family. As to quaternary structure, part of the 50S ribosomal subunit. Forms a cluster with proteins L14 and L19. Methylated by PrmB.

Its function is as follows. One of the primary rRNA binding proteins, it binds directly near the 3'-end of the 23S rRNA, where it nucleates assembly of the 50S subunit. This chain is Large ribosomal subunit protein uL3, found in Brucella canis (strain ATCC 23365 / NCTC 10854 / RM-666).